A 391-amino-acid polypeptide reads, in one-letter code: S-adenosylmethionine synthase 1 (391 aa).

Glutamate 9 is a Mg(2+) binding site. Histidine 15 provides a ligand contact to ATP. Position 43 (glutamate 43) interacts with K(+). L-methionine-binding residues include glutamate 56 and glutamine 99. ATP-binding positions include 167–169 (DGK), 235–238 (SGRF), aspartate 246, 252–253 (RK), alanine 269, lysine 273, and lysine 277. Aspartate 246 lines the L-methionine pocket. Lysine 277 serves as a coordination point for L-methionine.

It belongs to the AdoMet synthase family. In terms of assembly, homotetramer. The cofactor is Mn(2+). Mg(2+) serves as cofactor. It depends on Co(2+) as a cofactor. K(+) is required as a cofactor.

It localises to the cytoplasm. The catalysed reaction is L-methionine + ATP + H2O = S-adenosyl-L-methionine + phosphate + diphosphate. It participates in amino-acid biosynthesis; S-adenosyl-L-methionine biosynthesis; S-adenosyl-L-methionine from L-methionine: step 1/1. Catalyzes the formation of S-adenosylmethionine from methionine and ATP. The reaction comprises two steps that are both catalyzed by the same enzyme: formation of S-adenosylmethionine (AdoMet) and triphosphate, and subsequent hydrolysis of the triphosphate. This chain is S-adenosylmethionine synthase 1 (METK1), found in Vitis vinifera (Grape).